Here is a 257-residue protein sequence, read N- to C-terminus: MSVPLILTILAGAATFIGAFLGVLGQKTSNRLLAFSLGFAAGIMLLISLMEMLPAALAAEGMSPVLGYGMFIFGLLGYLGLDRMLPHAHPQDLMQKSVQPLPKSIKRTAILLTLGISLHNFPEGIATFVTASSNLELGFGIALAVALHNIPEGLAVVGPVYAATGSKRTAILWAGISGLAEILGGVLAWLILGSMISPVVMAAIMAAVAGIMVALSVDELMPLAKEIDPNNNPSYGVLCGMSVMGFSLVLLQTAGIG.

Helical transmembrane passes span Leu5–Gly25, Leu32–Met52, Gly61–Leu81, Ala109–Val129, Leu137–Val157, Ile171–Ile191, Met195–Leu215, and Gly236–Ile256. Fe(2+) is bound by residues Asn120 and Glu123. Glu123 and His148 together coordinate Zn(2+). Asn149, Glu152, and Glu181 together coordinate Fe(2+). Residue Glu152 coordinates Zn(2+).

Belongs to the ZIP transporter (TC 2.A.5) family. ZupT subfamily.

It localises to the cell inner membrane. The catalysed reaction is Zn(2+)(in) = Zn(2+)(out). Its function is as follows. Mediates zinc uptake. May also transport other divalent cations. In Shigella dysenteriae serotype 1 (strain Sd197), this protein is Zinc transporter ZupT.